A 135-amino-acid polypeptide reads, in one-letter code: MAGRGKAIGSGAAKKAMSRSSKAGLQFPVGRIARFLKAGKYAERVGAGAPVYLAAVLEYLAAEVLELAGNAARDNKKTRIVPRHIQLAVRNDEELSRLLGTVTIASGGVMPNIHNLLLPKKAGGSAKAAAGDDDN.

This sequence belongs to the histone H2A family. As to quaternary structure, the nucleosome is a histone octamer containing two molecules each of H2A, H2B, H3 and H4 assembled in one H3-H4 heterotetramer and two H2A-H2B heterodimers. The octamer wraps approximately 147 bp of DNA.

It is found in the nucleus. Its subcellular location is the chromosome. Functionally, core component of nucleosome. Nucleosomes wrap and compact DNA into chromatin, limiting DNA accessibility to the cellular machineries which require DNA as a template. Histones thereby play a central role in transcription regulation, DNA repair, DNA replication and chromosomal stability. DNA accessibility is regulated via a complex set of post-translational modifications of histones, also called histone code, and nucleosome remodeling. This Oryza sativa subsp. indica (Rice) protein is Probable histone H2A.2.